The sequence spans 901 residues: Core protein VP3 (901 aa).

Belongs to the orbivirus VP3 family.

Its subcellular location is the virion. In terms of biological role, the VP3 protein is one of the five proteins (with VP1, VP4, VP6 and VP7) which form the inner capsid of the virus. This is Core protein VP3 (Segment-3) from Bluetongue virus 11 (isolate USA) (BTV 11).